We begin with the raw amino-acid sequence, 123 residues long: Holo-[acyl-carrier-protein] synthase (123 aa).

Mg(2+) is bound by residues Asp8 and Glu60.

This sequence belongs to the P-Pant transferase superfamily. AcpS family. The cofactor is Mg(2+).

The protein localises to the cytoplasm. It catalyses the reaction apo-[ACP] + CoA = holo-[ACP] + adenosine 3',5'-bisphosphate + H(+). In terms of biological role, transfers the 4'-phosphopantetheine moiety from coenzyme A to a Ser of acyl-carrier-protein. In Ehrlichia chaffeensis (strain ATCC CRL-10679 / Arkansas), this protein is Holo-[acyl-carrier-protein] synthase.